We begin with the raw amino-acid sequence, 155 residues long: Cytochrome c-type biogenesis protein CcmE (155 aa).

Over 1–8 (MHPKRKQR) the chain is Cytoplasmic. A helical; Signal-anchor for type II membrane protein transmembrane segment spans residues 9–29 (LILVLFVVLVSSVGVSLTLYA). Over 30 to 155 (LNENINLFYP…KTCKGISYDS (126 aa)) the chain is Periplasmic. Heme contacts are provided by H124 and Y128.

This sequence belongs to the CcmE/CycJ family.

It localises to the cell inner membrane. In terms of biological role, heme chaperone required for the biogenesis of c-type cytochromes. Transiently binds heme delivered by CcmC and transfers the heme to apo-cytochromes in a process facilitated by CcmF and CcmH. The polypeptide is Cytochrome c-type biogenesis protein CcmE (Teredinibacter turnerae (strain ATCC 39867 / T7901)).